Consider the following 353-residue polypeptide: G-protein complex alpha subunit gpaA (353 aa).

Residues 1 to 25 (MGCGMSTEDKEGKARNEEIENQLKR) are disordered. The segment covering 7–25 (TEDKEGKARNEEIENQLKR) has biased composition (basic and acidic residues). The region spanning 32 to 353 (NEIKMLLLGA…QENLRLCGLI (322 aa)) is the G-alpha domain. Residues 35-48 (KMLLLGAGESGKST) form a G1 motif region. Ser47 and Thr181 together coordinate a divalent metal cation. The interval 173 to 181 (DVLRSRVKT) is G2 motif. The G3 motif stretch occupies residues 196–205 (YRMFDVGGQR). The G4 motif stretch occupies residues 265 to 272 (ILFLNKID). The tract at residues 323–328 (TCATDT) is G5 motif.

The protein belongs to the G-alpha family. G(q) subfamily. In terms of assembly, g proteins are composed of 3 units; alpha, beta and gamma. The alpha chain contains the guanine nucleotide binding site. Interacts with gprM.

Functionally, G-protein complex alpha subunit that plays a role in conidiation and regulation of the biosynthesis of secondary metabolites such as dihydroxynaphthalene (DHN)-melanin, via interaction with the G protein-coupled receptor gprM. The sequence is that of G-protein complex alpha subunit gpaA from Aspergillus fumigatus (strain CBS 144.89 / FGSC A1163 / CEA10) (Neosartorya fumigata).